The chain runs to 887 residues: Translation initiation factor IF-2 (887 aa).

Residues 1–259 (MSDEQDQGET…KVGDDRRRGA (259 aa)) form a disordered region. Positions 62 to 94 (GRPSAPSRASGGAAAPRGLTAAEQAARQRAVVE) are enriched in low complexity. Composition is skewed to basic and acidic residues over residues 95 to 111 (QQRE…EQEK) and 119 to 158 (EEAR…RRAA). Positions 159 to 210 (EASQATAAPPAPAAAASPRAAMPAPTAAPARPGAAPARRTAPVPPATSASET) are enriched in low complexity. Positions 250-259 (KVGDDRRRGA) are enriched in basic and acidic residues. The tr-type G domain occupies 386–556 (VRPPVVTIMG…LLQAELLDLK (171 aa)). The G1 stretch occupies residues 395–402 (GHVDHGKT). 395–402 (GHVDHGKT) lines the GTP pocket. The interval 420-424 (GITQH) is G2. The interval 442–445 (DTPG) is G3. GTP contacts are provided by residues 442-446 (DTPGH) and 496-499 (NKID). A G4 region spans residues 496 to 499 (NKID). The segment at 532–534 (SAL) is G5.

It belongs to the TRAFAC class translation factor GTPase superfamily. Classic translation factor GTPase family. IF-2 subfamily.

It is found in the cytoplasm. Its function is as follows. One of the essential components for the initiation of protein synthesis. Protects formylmethionyl-tRNA from spontaneous hydrolysis and promotes its binding to the 30S ribosomal subunits. Also involved in the hydrolysis of GTP during the formation of the 70S ribosomal complex. This chain is Translation initiation factor IF-2, found in Acidiphilium cryptum (strain JF-5).